A 357-amino-acid polypeptide reads, in one-letter code: Glutamyl endopeptidase (357 aa).

An N-terminal signal peptide occupies residues 1–29 (MKGKFLKVSSLFVATLTTATLVSSPAANA). Positions 30 to 68 (LSSKAMDNHPQQTQTDKQQTPKIQKGGNLKPLEQRERAN) are excised as a propeptide. The interval 33–58 (KAMDNHPQQTQTDKQQTPKIQKGGNL) is disordered. The span at 40–54 (QQTQTDKQQTPKIQK) shows a compositional bias: low complexity. Active-site charge relay system residues include His119, Asp161, and Ser237. The tract at residues 282–357 (NFANDDHPNN…NNNSDNPDAA (76 aa)) is disordered. 18 consecutive repeat copies span residues 289–291 (PNN), 292–294 (PDN), 295–297 (PDN), 298–300 (PNN), 301–303 (PDN), 304–306 (PNN), 307–309 (PDN), 310–312 (PNN), 313–315 (PDN), 316–318 (PDN), 319–321 (PNN), 322–324 (PDN), 325–327 (PNN), 328–330 (PDN), 331–333 (PNN), 337–339 (PNN), 340–342 (PNN), and 343–345 (PDN). Residues 289-345 (PNNPDNPDNPNNPDNPNNPDNPNNPDNPDNPNNPDNPNNPDNPNNPDQPNNPNNPDN) form an 18 X 3 AA repeats of P-[DN]-N region. Positions 291 to 357 (NPDNPDNPNN…NNNSDNPDAA (67 aa)) are enriched in low complexity.

The protein belongs to the peptidase S1B family. Proteolytically cleaved by aureolysin (aur). This cleavage leads to the activation of SspA.

Its subcellular location is the secreted. It carries out the reaction Preferential cleavage: Glu-|-Xaa, Asp-|-Xaa.. Functionally, preferentially cleaves peptide bonds on the carboxyl-terminal side of aspartate and glutamate. Along with other extracellular proteases it is involved in colonization and infection of human tissues. Required for proteolytic maturation of thiol protease SspB and inactivation of SspC, an inhibitor of SspB. It is the most important protease for degradation of fibronectin-binding protein (FnBP) and surface protein A, which are involved in adherence to host cells. May also protect bacteria against host defense mechanism by cleaving the immunoglobulin classes IgG, IgA and IgM. May be involved in the stability of secreted lipases. The chain is Glutamyl endopeptidase (sspA) from Staphylococcus aureus (strain MRSA252).